A 329-amino-acid polypeptide reads, in one-letter code: Cuticle collagen 6 (329 aa).

Triple-helical region stretches follow at residues G142–D171, G189–P212, G216–L248, G253–S279, and G282–C320. Residues P146–Y329 are disordered. Basic and acidic residues predominate over residues D156 to E173. Over residues P187–P199 the composition is skewed to low complexity. A compositionally biased stretch (pro residues) spans K200 to P212. Over residues V251–N272 the composition is skewed to pro residues. Positions P273–G282 are enriched in low complexity. Residues C320–Y329 show a composition bias toward pro residues.

This sequence belongs to the cuticular collagen family. As to quaternary structure, collagen polypeptide chains are complexed within the cuticle by disulfide bonds and other types of covalent cross-links.

In terms of biological role, nematode cuticles are composed largely of collagen-like proteins. The cuticle functions both as an exoskeleton and as a barrier to protect the worm from its environment. In Caenorhabditis elegans, this protein is Cuticle collagen 6.